A 147-amino-acid polypeptide reads, in one-letter code: uncharacterized protein (147 aa).

It to B.subtilis XkdM.

This is an uncharacterized protein from Bacillus subtilis (strain 168).